A 272-amino-acid polypeptide reads, in one-letter code: Indole-3-glycerol phosphate synthase (272 aa).

This sequence belongs to the TrpC family.

The catalysed reaction is 1-(2-carboxyphenylamino)-1-deoxy-D-ribulose 5-phosphate + H(+) = (1S,2R)-1-C-(indol-3-yl)glycerol 3-phosphate + CO2 + H2O. Its pathway is amino-acid biosynthesis; L-tryptophan biosynthesis; L-tryptophan from chorismate: step 4/5. The sequence is that of Indole-3-glycerol phosphate synthase from Mycobacterium tuberculosis (strain ATCC 25177 / H37Ra).